A 521-amino-acid polypeptide reads, in one-letter code: tRNA (adenine(58)-N(1))-methyltransferase non-catalytic subunit trm6 (521 aa).

Disordered stretches follow at residues 1–24 (METE…NNNN), 305–336 (IYDK…AKTI), and 452–521 (QKST…KIDE). The span at 12 to 24 (KSTTSNTNDNNNN) shows a compositional bias: low complexity. Positions 308–334 (KQVKEKEKEKEKDENVKDEKESGEEAK) are enriched in basic and acidic residues. Composition is skewed to low complexity over residues 452–476 (QKST…TKTT) and 487–502 (DATT…AATT). A compositionally biased stretch (basic and acidic residues) spans 510–521 (SESALKKRKIDE).

Belongs to the TRM6/GCD10 family. In terms of assembly, heterotetramer; composed of two copies of trmt6 and two copies of trmt61a.

It is found in the nucleus. Substrate-binding subunit of tRNA (adenine-N(1)-)-methyltransferase, which catalyzes the formation of N(1)-methyladenine at position 58 (m1A58) in initiator methionyl-tRNA. This is tRNA (adenine(58)-N(1))-methyltransferase non-catalytic subunit trm6 (trmt6) from Dictyostelium discoideum (Social amoeba).